Consider the following 327-residue polypeptide: Clavesin-2 (327 aa).

In terms of domain architecture, CRAL-TRIO spans 96–257 (IKQALKDGFP…EFGGMLPPYD (162 aa)). Positions 288–327 (VDKELSPKSMKRSQSVVDPTALKRMDKSEEENMQPLLSLD) are disordered. Phosphoserine is present on serine 325.

Forms a complex with clathrin heavy chain and gamma-adaptin. Expressed in brain with no expression detected in non-neuronal tissues (at protein level).

It is found in the golgi apparatus. The protein resides in the trans-Golgi network membrane. Its subcellular location is the early endosome membrane. The protein localises to the cytoplasmic vesicle. It localises to the clathrin-coated vesicle. Its function is as follows. Required for normal morphology of late endosomes and/or lysosomes in neurons. Binds phosphatidylinositol 3,5-bisphosphate (PtdIns(3,5)P2). This Rattus norvegicus (Rat) protein is Clavesin-2.